The chain runs to 303 residues: Hydroxyethylthiazole kinase (303 aa).

Polar residues predominate over residues 1 to 15 (MTTASTTPNSDTSNL). A disordered region spans residues 1–23 (MTTASTTPNSDTSNLHEVAPDDP). Met67 provides a ligand contact to substrate. Residues Arg142 and Ser206 each contribute to the ATP site. Gly233 is a substrate binding site.

Belongs to the Thz kinase family. It depends on Mg(2+) as a cofactor.

The enzyme catalyses 5-(2-hydroxyethyl)-4-methylthiazole + ATP = 4-methyl-5-(2-phosphooxyethyl)-thiazole + ADP + H(+). It functions in the pathway cofactor biosynthesis; thiamine diphosphate biosynthesis; 4-methyl-5-(2-phosphoethyl)-thiazole from 5-(2-hydroxyethyl)-4-methylthiazole: step 1/1. Its function is as follows. Catalyzes the phosphorylation of the hydroxyl group of 4-methyl-5-beta-hydroxyethylthiazole (THZ). This is Hydroxyethylthiazole kinase from Bifidobacterium animalis subsp. lactis (strain AD011).